The primary structure comprises 283 residues: MAAQIINGFELAKEKRAQLAKEVEQLKREGIEPALAVILVGDHPASQSYVKAKQKACEEIGIRSILLTFPNDISESFLLEQIARLNKDRSIHGILVQLPLPSQINELHVIEAIAPEKDVDGFHPLNVGRMMIGQRAFLPCTPYGILYMVQSLQVDIIGKHVVVVGRSHIVGKPVGQLFLREHATVTYCHSRTNDLEAITRQADILIVAVGKPKLITSSYVKEGAIVIDVGVNRLENGKLCGDVDFDDVKQVASYITPVPKGVGPMTITMLLHNTVQAAREQHK.

Residues 165–167, Ser-190, and Val-231 each bind NADP(+); that span reads GRS.

This sequence belongs to the tetrahydrofolate dehydrogenase/cyclohydrolase family. As to quaternary structure, homodimer.

It catalyses the reaction (6R)-5,10-methylene-5,6,7,8-tetrahydrofolate + NADP(+) = (6R)-5,10-methenyltetrahydrofolate + NADPH. It carries out the reaction (6R)-5,10-methenyltetrahydrofolate + H2O = (6R)-10-formyltetrahydrofolate + H(+). The protein operates within one-carbon metabolism; tetrahydrofolate interconversion. Functionally, catalyzes the oxidation of 5,10-methylenetetrahydrofolate to 5,10-methenyltetrahydrofolate and then the hydrolysis of 5,10-methenyltetrahydrofolate to 10-formyltetrahydrofolate. This Anoxybacillus flavithermus (strain DSM 21510 / WK1) protein is Bifunctional protein FolD.